The chain runs to 263 residues: Ribosomal RNA small subunit methyltransferase A (263 aa).

Residues Asn13, Thr15, Gly40, Glu61, Asp85, and Asn105 each coordinate S-adenosyl-L-methionine.

Belongs to the class I-like SAM-binding methyltransferase superfamily. rRNA adenine N(6)-methyltransferase family. RsmA subfamily.

It localises to the cytoplasm. It catalyses the reaction adenosine(1518)/adenosine(1519) in 16S rRNA + 4 S-adenosyl-L-methionine = N(6)-dimethyladenosine(1518)/N(6)-dimethyladenosine(1519) in 16S rRNA + 4 S-adenosyl-L-homocysteine + 4 H(+). Its function is as follows. Specifically dimethylates two adjacent adenosines (A1518 and A1519) in the loop of a conserved hairpin near the 3'-end of 16S rRNA in the 30S particle. May play a critical role in biogenesis of 30S subunits. The polypeptide is Ribosomal RNA small subunit methyltransferase A (Mycoplasma pneumoniae (strain ATCC 29342 / M129 / Subtype 1) (Mycoplasmoides pneumoniae)).